Consider the following 1023-residue polypeptide: Probable beta-glucosidase E (1023 aa).

Residues 1 to 51 (MPKSYTPVHDSIPEEDHFSSDDESNFRLHRIDRSASRSQSPKENEGEPSIL) form a disordered region. Over 1 to 128 (MPKSYTPVHD…AVYYSKTWWR (128 aa)) the chain is Cytoplasmic. Positions 11-45 (SIPEEDHFSSDDESNFRLHRIDRSASRSQSPKENE) are enriched in basic and acidic residues. Residues 129–149 (TLVVVIIALGLLVWGFLKYAS) traverse the membrane as a helical; Signal-anchor for type II membrane protein segment. The Extracellular segment spans residues 150 to 1023 (TRGDIWEEYD…NLPLGKPFDP (874 aa)). N-linked (GlcNAc...) asparagine glycans are attached at residues Asn199 and Asn387. Residue Asp415 is part of the active site. Residues Asn458 and Asn497 are each glycosylated (N-linked (GlcNAc...) asparagine). 2 disordered regions span residues 485-515 (WESP…GSPG) and 822-841 (NPSR…PSYD). The span at 827-838 (PAARPPDAVAPP) shows a compositional bias: low complexity. A glycan (N-linked (GlcNAc...) asparagine) is linked at Asn848. Residues 873–909 (ATTPPPPNPEASGSATDQKPHRTKPSDAGGGAGGNPS) form a disordered region. Asn964 and Asn979 each carry an N-linked (GlcNAc...) asparagine glycan.

Belongs to the glycosyl hydrolase 3 family.

The protein resides in the cell membrane. The catalysed reaction is Hydrolysis of terminal, non-reducing beta-D-glucosyl residues with release of beta-D-glucose.. It functions in the pathway glycan metabolism; cellulose degradation. In terms of biological role, beta-glucosidases are one of a number of cellulolytic enzymes involved in the degradation of cellulosic biomass. Catalyzes the last step releasing glucose from the inhibitory cellobiose. This chain is Probable beta-glucosidase E (bglE), found in Emericella nidulans (strain FGSC A4 / ATCC 38163 / CBS 112.46 / NRRL 194 / M139) (Aspergillus nidulans).